We begin with the raw amino-acid sequence, 711 residues long: Probable cadmium-transporting ATPase (711 aa).

An HMA domain is found at 3 to 66; it reads EKTVYRVDGL…AGAFEHLKII (64 aa). Cys14 and Cys17 together coordinate Cd(2+). Transmembrane regions (helical) follow at residues 89 to 109, 111 to 131, 151 to 171, 317 to 337, and 347 to 367; these read WRLLLSGLFIAVGYASQIMNG, DFYLTNALFIFAIFIGGYSLF, IAIIGAAFIGEWAEGSIVVIL, TPAIIVIAALIATVPPLLFGG, and LSVLVVGCPCALVVSTPVAIV. The active-site 4-aspartylphosphate intermediate is Asp398. A helical membrane pass occupies residues 669–689; that stretch reads VIKLIALLLVIPGWLTLWIAI.

This sequence belongs to the cation transport ATPase (P-type) (TC 3.A.3) family. Type IB subfamily.

Its subcellular location is the cell membrane. The catalysed reaction is Cd(2+)(in) + ATP + H2O = Cd(2+)(out) + ADP + phosphate + H(+). Couples the hydrolysis of ATP with the export of cadmium. The sequence is that of Probable cadmium-transporting ATPase (cadA) from Listeria monocytogenes.